An 899-amino-acid polypeptide reads, in one-letter code: Translation initiation factor IF-2 (899 aa).

3 disordered regions span residues 115-137 (EAKARAEQQAREAAEQKARLQTE), 170-189 (RGGGTVKPAPKPAETLEQKK), and 262-309 (DREI…HGFE). Residues 399 to 568 (TRPPVVTIMG…LIQSELMELK (170 aa)) form the tr-type G domain. Residues 408-415 (GHVDHGKT) form a G1 region. 408–415 (GHVDHGKT) is a binding site for GTP. A G2 region spans residues 433-437 (GITQH). Residues 454–457 (DTPG) are G3. GTP is bound by residues 454–458 (DTPGH) and 508–511 (NKMD). Positions 508-511 (NKMD) are G4. A G5 region spans residues 544-546 (SAH).

The protein belongs to the TRAFAC class translation factor GTPase superfamily. Classic translation factor GTPase family. IF-2 subfamily.

Its subcellular location is the cytoplasm. Functionally, one of the essential components for the initiation of protein synthesis. Protects formylmethionyl-tRNA from spontaneous hydrolysis and promotes its binding to the 30S ribosomal subunits. Also involved in the hydrolysis of GTP during the formation of the 70S ribosomal complex. The sequence is that of Translation initiation factor IF-2 from Acinetobacter baumannii (strain SDF).